A 351-amino-acid polypeptide reads, in one-letter code: UDP-glucose 4-epimerase 5 (351 aa).

Residues 13–15 (GYI), 34–38 (DNLDN), 64–65 (DL), phenylalanine 86, and lysine 90 contribute to the NAD(+) site. Position 130-132 (130-132 (SAT)) interacts with substrate. Tyrosine 154 functions as the Proton acceptor in the catalytic mechanism. 2 residues coordinate NAD(+): lysine 158 and tyrosine 182. Substrate-binding positions include 182–184 (YFN), 203–205 (NNL), 221–223 (TVF), arginine 236, and 298–301 (RPGD).

This sequence belongs to the NAD(P)-dependent epimerase/dehydratase family. In terms of assembly, forms homodimers and heterodimers. Requires NAD(+) as cofactor. As to expression, widely expressed.

The enzyme catalyses UDP-alpha-D-glucose = UDP-alpha-D-galactose. It participates in carbohydrate metabolism; galactose metabolism. Enhanced activity by NaCl. Inhibited by UDP. In terms of biological role, catalyzes the interconversion between UDP-glucose and UDP-galactose. This Arabidopsis thaliana (Mouse-ear cress) protein is UDP-glucose 4-epimerase 5.